Here is a 1372-residue protein sequence, read N- to C-terminus: DNA-directed RNA polymerase subunit beta (1372 aa).

It belongs to the RNA polymerase beta chain family. In terms of assembly, the RNAP catalytic core consists of 2 alpha, 1 beta, 1 beta' and 1 omega subunit. When a sigma factor is associated with the core the holoenzyme is formed, which can initiate transcription.

The enzyme catalyses RNA(n) + a ribonucleoside 5'-triphosphate = RNA(n+1) + diphosphate. Its function is as follows. DNA-dependent RNA polymerase catalyzes the transcription of DNA into RNA using the four ribonucleoside triphosphates as substrates. The protein is DNA-directed RNA polymerase subunit beta of Psychrobacter sp. (strain PRwf-1).